The chain runs to 140 residues: Organic hydroperoxide resistance protein-like (140 aa).

Belongs to the OsmC/Ohr family.

The polypeptide is Organic hydroperoxide resistance protein-like (Mycoplasma pneumoniae (strain ATCC 29342 / M129 / Subtype 1) (Mycoplasmoides pneumoniae)).